A 90-amino-acid chain; its full sequence is Large ribosomal subunit protein bL27 (90 aa).

The disordered stretch occupies residues 1–20 (MAHKKAGGSSRNGRDSAGKR).

Belongs to the bacterial ribosomal protein bL27 family.

The polypeptide is Large ribosomal subunit protein bL27 (Rhodopseudomonas palustris (strain BisB18)).